The sequence spans 279 residues: Ribosomal RNA small subunit methyltransferase J (279 aa).

S-adenosyl-L-methionine contacts are provided by residues 138-139 and Asp-194; that span reads ER.

Belongs to the methyltransferase superfamily. RsmJ family.

The protein resides in the cytoplasm. The enzyme catalyses guanosine(1516) in 16S rRNA + S-adenosyl-L-methionine = N(2)-methylguanosine(1516) in 16S rRNA + S-adenosyl-L-homocysteine + H(+). In terms of biological role, specifically methylates the guanosine in position 1516 of 16S rRNA. In Acinetobacter baumannii (strain ATCC 17978 / DSM 105126 / CIP 53.77 / LMG 1025 / NCDC KC755 / 5377), this protein is Ribosomal RNA small subunit methyltransferase J.